The sequence spans 240 residues: RNA-free ribonuclease P (240 aa).

The protein belongs to the HARP family.

It carries out the reaction Endonucleolytic cleavage of RNA, removing 5'-extranucleotides from tRNA precursor.. Its function is as follows. RNA-free RNase P that catalyzes the removal of the 5'-leader sequence from pre-tRNA to produce the mature 5'-terminus. This chain is RNA-free ribonuclease P, found in Methanococcus aeolicus (strain ATCC BAA-1280 / DSM 17508 / OCM 812 / Nankai-3).